The sequence spans 477 residues: Asparaginyl-tRNA synthetase (477 aa).

A mitochondrion-targeting transit peptide spans Met-1–Cys-14. At Lys-353 the chain carries N6-acetyllysine.

This sequence belongs to the class-II aminoacyl-tRNA synthetase family. As to quaternary structure, homodimer.

It localises to the mitochondrion matrix. The protein resides in the mitochondrion. The catalysed reaction is tRNA(Asn) + L-asparagine + ATP = L-asparaginyl-tRNA(Asn) + AMP + diphosphate + H(+). Functionally, mitochondrial aminoacyl-tRNA synthetase that catalyzes the specific attachment of the asparagine amino acid (aa) to the homologous transfer RNA (tRNA), further participating in protein synthesis. The reaction occurs in a two steps: asparagine is first activated by ATP to form Asn-AMP and then transferred to the acceptor end of tRNA(Asn). The polypeptide is Asparaginyl-tRNA synthetase (Homo sapiens (Human)).